A 319-amino-acid polypeptide reads, in one-letter code: Taste receptor type 2 member 30 (319 aa).

A topological domain (extracellular) is located at residue Met-1. The helical transmembrane segment at 2–22 (ITFLPIIFSILIVVIFVVGNF) threads the bilayer. Topologically, residues 23–46 (ANGFIALVNSIEWVKRQKISFVDQ) are cytoplasmic. The chain crosses the membrane as a helical span at residues 47–67 (ILTALAVSRVGLLWVLLLHWY). Topologically, residues 68 to 86 (ATQLNPAFYSVEVRITVYN) are extracellular. The helical transmembrane segment at 87-107 (VWAVTNHFSSWLATSLSMFYL) threads the bilayer. At 108-126 (LKIANFSNLIFLRIKRRVK) the chain is on the cytoplasmic side. Residues 127 to 147 (SVVLVILLGPLLFLVCHLFVI) traverse the membrane as a helical segment. Over 148 to 178 (NMDETIWTKEYEGNMTWKIKLKSAMYHSNMT) the chain is Extracellular. 2 N-linked (GlcNAc...) asparagine glycosylation sites follow: Asn-161 and Asn-176. A helical membrane pass occupies residues 179–199 (LTILANFVPLTLTLISFLLLI). Residues 200 to 229 (CSLCKHLKKMQLHGKGSQDPSTKVHIKALQ) are Cytoplasmic-facing. A helical membrane pass occupies residues 230-250 (TVTSFLLLCAIYFLSMIISVC). Over 251 to 259 (NLGRLQKQP) the chain is Extracellular. A helical membrane pass occupies residues 260–280 (VFMFCQAIIFSYPSTHPFILI). Topologically, residues 281 to 319 (LGNKKLKQIFLSVLWHVRYWVKDRSLRLHRFTRAALCKG) are cytoplasmic.

This sequence belongs to the G-protein coupled receptor T2R family.

The protein resides in the membrane. Its function is as follows. Receptor that may play a role in the perception of bitterness and is gustducin-linked. May play a role in sensing the chemical composition of the gastrointestinal content. The activity of this receptor may stimulate alpha gustducin, mediate PLC-beta-2 activation and lead to the gating of TRPM5. In Pan paniscus (Pygmy chimpanzee), this protein is Taste receptor type 2 member 30 (TAS2R30).